Here is a 405-residue protein sequence, read N- to C-terminus: Probable tRNA sulfurtransferase (405 aa).

The THUMP domain maps to 60-165; sequence EPVNDRLKVV…QDGAYISNQL (106 aa). Residues 183–184, 208–209, arginine 265, glycine 287, and glutamine 296 contribute to the ATP site; these read ML and HF.

The protein belongs to the ThiI family.

It is found in the cytoplasm. The enzyme catalyses [ThiI sulfur-carrier protein]-S-sulfanyl-L-cysteine + a uridine in tRNA + 2 reduced [2Fe-2S]-[ferredoxin] + ATP + H(+) = [ThiI sulfur-carrier protein]-L-cysteine + a 4-thiouridine in tRNA + 2 oxidized [2Fe-2S]-[ferredoxin] + AMP + diphosphate. It carries out the reaction [ThiS sulfur-carrier protein]-C-terminal Gly-Gly-AMP + S-sulfanyl-L-cysteinyl-[cysteine desulfurase] + AH2 = [ThiS sulfur-carrier protein]-C-terminal-Gly-aminoethanethioate + L-cysteinyl-[cysteine desulfurase] + A + AMP + 2 H(+). Its pathway is cofactor biosynthesis; thiamine diphosphate biosynthesis. Catalyzes the ATP-dependent transfer of a sulfur to tRNA to produce 4-thiouridine in position 8 of tRNAs, which functions as a near-UV photosensor. Also catalyzes the transfer of sulfur to the sulfur carrier protein ThiS, forming ThiS-thiocarboxylate. This is a step in the synthesis of thiazole, in the thiamine biosynthesis pathway. The sulfur is donated as persulfide by IscS. The protein is Probable tRNA sulfurtransferase of Lactobacillus delbrueckii subsp. bulgaricus (strain ATCC BAA-365 / Lb-18).